The primary structure comprises 115 residues: Replication initiation control protein YabA (115 aa).

Zn(2+)-binding residues include histidine 90, cysteine 92, cysteine 106, and cysteine 109.

This sequence belongs to the YabA family. As to quaternary structure, homotetramer. Interacts with both DnaA and DnaN, acting as a bridge between these two proteins. Requires Zn(2+) as cofactor.

The protein localises to the cytoplasm. Its subcellular location is the nucleoid. In terms of biological role, involved in control of chromosome replication initiation. Inhibits the cooperative binding of DnaA to the oriC region, thus negatively regulating initiation of chromosome replication. Inhibits the ability of DnaA-ATP to form a helix on DNA; does not disassemble preformed DnaA-DNA helices. Decreases the residence time of DnaA on the chromosome at its binding sites (oriC, replication forks and promoter-binding sites). Tethers DnaA to the replication machinery via the DNA polymerase beta sliding clamp subunit (dnaN). Associates with oriC and other DnaA targets on the chromosome in a DnaA-dependent manner. In Staphylococcus epidermidis (strain ATCC 35984 / DSM 28319 / BCRC 17069 / CCUG 31568 / BM 3577 / RP62A), this protein is Replication initiation control protein YabA.